We begin with the raw amino-acid sequence, 432 residues long: Ribosomal protein uS12 methylthiotransferase RimO (432 aa).

In terms of domain architecture, MTTase N-terminal spans 4 to 122 (NTIDIITLGC…LLADLGKAYK (119 aa)). [4Fe-4S] cluster contacts are provided by C13, C51, C85, C146, C150, and C153. A Radical SAM core domain is found at 132–363 (TTPHHYAYLK…MALQQEIAGE (232 aa)). One can recognise a TRAM domain in the interval 366–432 (QTKIGKEFKV…DDFDLYASIL (67 aa)).

Belongs to the methylthiotransferase family. RimO subfamily. It depends on [4Fe-4S] cluster as a cofactor.

The protein localises to the cytoplasm. The catalysed reaction is L-aspartate(89)-[ribosomal protein uS12]-hydrogen + (sulfur carrier)-SH + AH2 + 2 S-adenosyl-L-methionine = 3-methylsulfanyl-L-aspartate(89)-[ribosomal protein uS12]-hydrogen + (sulfur carrier)-H + 5'-deoxyadenosine + L-methionine + A + S-adenosyl-L-homocysteine + 2 H(+). Functionally, catalyzes the methylthiolation of an aspartic acid residue of ribosomal protein uS12. In Phocaeicola vulgatus (strain ATCC 8482 / DSM 1447 / JCM 5826 / CCUG 4940 / NBRC 14291 / NCTC 11154) (Bacteroides vulgatus), this protein is Ribosomal protein uS12 methylthiotransferase RimO.